The following is a 176-amino-acid chain: NAD(P)H-quinone oxidoreductase subunit 6, chloroplastic (176 aa).

5 helical membrane passes run 10-30, 32-52, 61-81, 95-115, and 152-172; these read FLLV…VLLT, PIFS…FYIL, AQLL…VMFM, VGNG…ITII, and FFLP…GAIA.

Belongs to the complex I subunit 6 family. In terms of assembly, NDH is composed of at least 16 different subunits, 5 of which are encoded in the nucleus.

The protein localises to the plastid. The protein resides in the chloroplast thylakoid membrane. It catalyses the reaction a plastoquinone + NADH + (n+1) H(+)(in) = a plastoquinol + NAD(+) + n H(+)(out). It carries out the reaction a plastoquinone + NADPH + (n+1) H(+)(in) = a plastoquinol + NADP(+) + n H(+)(out). In terms of biological role, NDH shuttles electrons from NAD(P)H:plastoquinone, via FMN and iron-sulfur (Fe-S) centers, to quinones in the photosynthetic chain and possibly in a chloroplast respiratory chain. The immediate electron acceptor for the enzyme in this species is believed to be plastoquinone. Couples the redox reaction to proton translocation, and thus conserves the redox energy in a proton gradient. The protein is NAD(P)H-quinone oxidoreductase subunit 6, chloroplastic (ndhG) of Populus alba (White poplar).